A 28-amino-acid chain; its full sequence is Ranatuerin-2SEc (28 aa).

The cysteines at positions 23 and 28 are disulfide-linked.

As to expression, expressed by the skin glands.

The protein localises to the secreted. Its function is as follows. Mast cell degranulating peptide. Causes histamine release from rat peritoneal mast cells in vitro. Has antibacterial activity against the Gram-negative bacterium E.coli K12 and Gram-positive bacterium M.luteus NCT C2665. The sequence is that of Ranatuerin-2SEc from Lithobates sevosus (Dusky gopher frog).